The chain runs to 141 residues: VLTHEDCELLQQTWEKVLGHQEDFGAEALERMFITYPQTKTYFPHFDLHHGSEQIRNHGRKVVNALGEAVKNMDHMSTASGELSNLHAYNLRVDPVNFKLLSECFEVVLAVHLKDQYTPDVHRAYDKFLSAVGDMLAEKYR.

Residues 1-141 (VLTHEDCELL…VGDMLAEKYR (141 aa)) form the Globin domain. Positions 58 and 87 each coordinate heme b.

Belongs to the globin family. In terms of assembly, there are three forms of hemoglobin in Sphenodon: A, A' and D. Hb A is a tetramer of two alpha-A and two beta-1, Hb A' is a tetramer of two alpha-a and two beta-2, Hb D is a tetramer of two alpha-D and two beta-2. In terms of tissue distribution, red blood cells.

Its function is as follows. Involved in oxygen transport from the lung to the various peripheral tissues. The protein is Hemoglobin subunit alpha-D (HBAD) of Sphenodon punctatus (Tuatara).